The following is a 270-amino-acid chain: Transcription factor PU.1 (270 aa).

Residues 124–162 (LSPAQPSSDEEEGERQSPPLEVSDGEADGLEPGPGLLHG) form a disordered region. A phosphoserine mark is found at Ser140 and Ser146. The span at 153 to 162 (LEPGPGLLHG) shows a compositional bias: low complexity. The ETS DNA-binding region spans 170 to 253 (IRLYQFLLDL…VKKKLTYQFS (84 aa)). Residues Lys217, Arg230, Arg233, and Lys243 each coordinate DNA.

Belongs to the ETS family. In terms of assembly, binds DNA as a monomer. Can form homomers. Directly interacts with CEBPD/NF-IL6-beta; this interaction does not affect DNA-binding properties of each partner. Interacts with NONO/p54(nrb). Interacts with RUNX1/AML1. Interacts with GFI1; the interaction represses SPI1 transcriptional activity, hence blocks SPI1-induced macrophage differentiation of myeloid progenitor cells. Interacts with CEBPE. Interacts with IRF4/Pip and IRF8. Interacts with JUN. Interacts with RB1. Interacts with TBP.

It localises to the nucleus. With respect to regulation, transcriptional activity at macrophage-specific genes is inhibited by interaction with GFI1, which results in the inhibition of SPI1-induced macrophage differentiation of myeloid progenitor cells, but not that of the granulocyte lineage. Its function is as follows. Pioneer transcription factor, which controls hematopoietic cell fate by decompacting stem cell heterochromatin and allowing other transcription factors to enter otherwise inaccessible genomic sites. Once in open chromatin, can directly control gene expression by binding genetic regulatory elements and can also more broadly influence transcription by recruiting transcription factors, such as interferon regulatory factors (IRFs), to otherwise inaccessible genomic regions. Transcriptionally activates genes important for myeloid and lymphoid lineages, such as CSF1R. Transcriptional activation from certain promoters, possibly containing low affinity binding sites, is achieved cooperatively with other transcription factors. FCER1A transactivation is achieved in cooperation with GATA1. May be particularly important for the pro- to pre-B cell transition. Binds (via the ETS domain) onto the purine-rich DNA core sequence 5'-GAGGAA-3', also known as the PU-box. In vitro can bind RNA and interfere with pre-mRNA splicing. This Sus scrofa (Pig) protein is Transcription factor PU.1 (SPI1).